Consider the following 483-residue polypeptide: MSDWTEAYRPTTLSEVRGNNKARDAFEEWAKAWEDHREAVILHGSPGVGKTSAAHALANDMGWPVLEMNASDARTKDEIERFAGRAASNATLGGGRQLIILDEADNLHQHKDRGGAAAMTRLVKDATQPVVLIANDYYEMSSGLRSACRDVEFRDVSARSIVPVLRDICRQENVEFDEDVLQEIAEANRGDLRGAVKDLQARERDGEIKPEGSEGSRDRTEDIFAFLDAVLKEESAEEALQTAYAVDETPDNLLQWIEDKVPKVYEGDELADAYEHLADADVWLGRVRATQNYSYWRYATDNVAAGVAAVRQEDRGGWTRYGGAPYRSSRDSTRDYIATRIAESAGVSTATARREILPYLSAMTHHCNNRELTVRMTARYELDAEHVAFITGSGKTTNKVQGIVEDAETRRETAAVDHGGGIFAPAVDDAQSDTESDDDDDGDTLAAFGADEPKEESVNREQSDGTADAEESDDGQAGLSDFM.

44-51 (GSPGVGKT) provides a ligand contact to ATP. The tract at residues 415 to 483 (AVDHGGGIFA…DGQAGLSDFM (69 aa)) is disordered. Acidic residues predominate over residues 430 to 443 (AQSDTESDDDDDGD). The segment covering 451–463 (DEPKEESVNREQS) has biased composition (basic and acidic residues).

It belongs to the activator 1 small subunits family. RfcL subfamily. In terms of assembly, heteromultimer composed of small subunits (RfcS) and large subunits (RfcL).

Part of the RFC clamp loader complex which loads the PCNA sliding clamp onto DNA. The sequence is that of Replication factor C large subunit from Natronomonas pharaonis (strain ATCC 35678 / DSM 2160 / CIP 103997 / JCM 8858 / NBRC 14720 / NCIMB 2260 / Gabara) (Halobacterium pharaonis).